Here is a 1551-residue protein sequence, read N- to C-terminus: ABC-type transporter phomO (1551 aa).

The next 7 membrane-spanning stretches (helical) occupy residues 34-54, 110-130, 139-159, 172-192, 202-222, 314-334, and 358-378; these read LYFE…LLAA, CTAG…CTTV, SVPA…LAHF, SSSL…APLV, GSAL…LIAV, LGLY…FTLA, and GLIG…GWYW. Residues 326–599 enclose the ABC transmembrane type-1 1 domain; that stretch reads LCLAGFTLAQ…LLQIIPSFGA (274 aa). N384 is a glycosylation site (N-linked (GlcNAc...) asparagine). 4 consecutive transmembrane segments (helical) span residues 428-448, 452-472, 535-555, and 577-597; these read LAYA…TWML, VGPP…ASTY, LIVG…VLVF, and LIWI…IPSF. An ABC transporter 1 domain is found at 645-861; it reads IHNSSFSYTD…VEDENGDVDN (217 aa). Residue N647 is glycosylated (N-linked (GlcNAc...) asparagine). Residue 678 to 685 coordinates ATP; it reads GPAGCGKS. N721 carries N-linked (GlcNAc...) asparagine glycosylation. Positions 843–889 are disordered; sequence YQFPPSQADVEDENGDVDNGAENTRPRESSHTTEAQSGPPEPKSKPT. Transmembrane regions (helical) follow at residues 903–923, 959–979, 1027–1044, and 1137–1157; these read SIGF…AFCL, VLPL…IVPL, LFNT…VILI, and LVLN…AVGL. The region spanning 910-1199 is the ABC transmembrane type-1 2 domain; sequence VLFIGGGIIF…LLTAWTSLET (290 aa). N1179 is a glycosylation site (N-linked (GlcNAc...) asparagine). Residues 1219–1228 are compositionally biased toward basic and acidic residues; that stretch reads DVLVRPDSLD. The disordered stretch occupies residues 1219-1296; it reads DVLVRPDSLD…HEATTITTTS (78 aa). Residues 1259–1270 show a composition bias toward acidic residues; the sequence is YDDDDESDENTD. Residues 1287–1535 form the ABC transporter 2 domain; sequence HEATTITTTS…SDIFAFFGRS (249 aa). Position 1323-1330 (1323-1330) interacts with ATP; it reads GRTGSGKS. N-linked (GlcNAc...) asparagine glycosylation occurs at N1486.

It belongs to the ABC transporter superfamily. ABCC family. Conjugate transporter (TC 3.A.1.208) subfamily.

It localises to the membrane. In terms of biological role, ABC-type transporter; part of the gene cluster that mediates the biosynthesis of the phomopsins, a group of hexapeptide mycotoxins which infects lupins and causes lupinosis disease in livestock. This Diaporthe leptostromiformis (Lupinosis disease fungus) protein is ABC-type transporter phomO.